A 103-amino-acid chain; its full sequence is Large ribosomal subunit protein uL24 (103 aa).

Belongs to the universal ribosomal protein uL24 family. In terms of assembly, part of the 50S ribosomal subunit.

In terms of biological role, one of two assembly initiator proteins, it binds directly to the 5'-end of the 23S rRNA, where it nucleates assembly of the 50S subunit. Functionally, one of the proteins that surrounds the polypeptide exit tunnel on the outside of the subunit. The polypeptide is Large ribosomal subunit protein uL24 (Sinorhizobium fredii (strain NBRC 101917 / NGR234)).